A 239-amino-acid polypeptide reads, in one-letter code: Large ribosomal subunit protein bL25 (239 aa).

The tract at residues 211–239 is disordered; it reads KGKKDKEDEEAEKGTSVASPTTATGGTKK. Residues 226–239 show a composition bias toward polar residues; the sequence is SVASPTTATGGTKK.

Belongs to the bacterial ribosomal protein bL25 family. CTC subfamily. In terms of assembly, part of the 50S ribosomal subunit; part of the 5S rRNA/L5/L18/L25 subcomplex. Contacts the 5S rRNA. Binds to the 5S rRNA independently of L5 and L18.

Functionally, this is one of the proteins that binds to the 5S RNA in the ribosome where it forms part of the central protuberance. This chain is Large ribosomal subunit protein bL25, found in Endomicrobium trichonymphae.